The sequence spans 60 residues: Metallothionein B (60 aa).

A beta region spans residues 1-28 (MDPCECSKTGSCNCGGSCKCSNCACTSC). Residues Cys-4, Cys-6, Cys-12, Cys-14, Cys-18, Cys-20, Cys-23, Cys-25, Cys-28, Cys-32, Cys-33, Cys-35, Cys-36, Cys-40, Cys-43, Cys-47, Cys-49, Cys-54, Cys-58, and Cys-59 each coordinate a divalent metal cation. An alpha region spans residues 29–60 (KKSCCPCCPSDCSKCASGCVCKGKTCDTSCCQ).

Belongs to the metallothionein superfamily. Type 1 family.

In terms of biological role, metallothioneins have a high content of cysteine residues that bind various heavy metals. The polypeptide is Metallothionein B (mtb) (Oncorhynchus mykiss (Rainbow trout)).